The primary structure comprises 673 residues: ATP-dependent DNA helicase Rep (673 aa).

Residues 1-280 (MRLNPGQQQA…IKLEQNYRSS (280 aa)) form the UvrD-like helicase ATP-binding domain. ATP contacts are provided by residues 22-29 (AGAGSGKT) and arginine 278. Residues 281–562 (GRILKAANIL…QLMTLHASKG (282 aa)) enclose the UvrD-like helicase C-terminal domain.

The protein belongs to the helicase family. UvrD subfamily. In terms of assembly, homodimer in association with DNA.

The enzyme catalyses Couples ATP hydrolysis with the unwinding of duplex DNA by translocating in the 3'-5' direction.. It catalyses the reaction ATP + H2O = ADP + phosphate + H(+). Binding to DNA induces dimerization, which is required for DNA helicase activity. Helicase activity is stimulated by PriC. Its function is as follows. Rep helicase is a single-stranded (ss)DNA-dependent ATPase involved in DNA replication; it can initiate unwinding at a nick in the DNA. It binds to ssDNA and acts in a progressive fashion along the DNA in the 3' to 5' direction. Binds double-stranded (ds)DNA with a 5' ss- but not 3' ss-extension and forked structures with either lagging or leading ssDNA. Part of the PriC-Rep pathway for restart of stalled replication forks, which reloads the DnaB replicative helicase on sites other than the origin of replication. This Escherichia coli (strain K12) protein is ATP-dependent DNA helicase Rep.